A 193-amino-acid polypeptide reads, in one-letter code: MPKGRRGSHSPTMSQRSAPPLYFPSLYDRGISSSPLSDFNIWKKLFVPLKAGGAPVGGAAGARSLSQALPAPAPPPPPPPGLGPSSERPWPSPWPSGLASIPYEPLRFFYSPPPGPEVVASPLVPCPSTPRLASASHPEELCELEIRIKELELLTITGDGFDSQSYTFLKALKDEKLQGLKTKQPGKKSASLS.

The tract at residues 55–94 (PVGGAAGARSLSQALPAPAPPPPPPPGLGPSSERPWPSPW) is disordered. Residues 71–82 (APAPPPPPPPGL) show a composition bias toward pro residues.

This is an uncharacterized protein from Homo sapiens (Human).